The sequence spans 204 residues: Proteasome subunit beta type-3-B (204 aa).

Belongs to the peptidase T1B family. As to quaternary structure, component of the 20S core complex of the 26S proteasome. The 26S proteasome is composed of a core protease (CP), known as the 20S proteasome, capped at one or both ends by the 19S regulatory particle (RP/PA700). The 20S proteasome core is composed of 28 subunits that are arranged in four stacked rings, resulting in a barrel-shaped structure. The two end rings are each formed by seven alpha subunits, and the two central rings are each formed by seven beta subunits. The catalytic chamber with the active sites is on the inside of the barrel.

It localises to the cytoplasm. Its subcellular location is the nucleus. Non-catalytic component of the proteasome, a multicatalytic proteinase complex which is characterized by its ability to cleave peptides with Arg, Phe, Tyr, Leu, and Glu adjacent to the leaving group at neutral or slightly basic pH. The proteasome has an ATP-dependent proteolytic activity. The chain is Proteasome subunit beta type-3-B (PBC2) from Arabidopsis thaliana (Mouse-ear cress).